Here is a 543-residue protein sequence, read N- to C-terminus: UBP9-binding protein bun62 (543 aa).

Ser43 carries the post-translational modification Phosphoserine. 5 WD repeats span residues 239 to 279 (LNSS…QPLH), 320 to 361 (FSKS…DVFH), 362 to 401 (SYFA…LVAR), 404 to 448 (GHKS…IHRP), and 513 to 542 (VDDS…TWQR).

In terms of assembly, interacts with ubp9 and bun107.

The protein localises to the nucleus. It localises to the cytoplasm. Its subcellular location is the cell tip. Its function is as follows. Required for the ubp9 recruitment to septa and cell tips but also for its enzymatic activity at these specific locations. In Schizosaccharomyces pombe (strain 972 / ATCC 24843) (Fission yeast), this protein is UBP9-binding protein bun62 (bun62).